The primary structure comprises 186 residues: Elongation factor P (186 aa).

It belongs to the elongation factor P family.

The protein resides in the cytoplasm. It functions in the pathway protein biosynthesis; polypeptide chain elongation. Functionally, involved in peptide bond synthesis. Stimulates efficient translation and peptide-bond synthesis on native or reconstituted 70S ribosomes in vitro. Probably functions indirectly by altering the affinity of the ribosome for aminoacyl-tRNA, thus increasing their reactivity as acceptors for peptidyl transferase. The chain is Elongation factor P from Thiobacillus denitrificans (strain ATCC 25259 / T1).